We begin with the raw amino-acid sequence, 307 residues long: Protein phosphatase EYA (307 aa).

The interval 1–15 (MNNDTSKKLGTLVSD) is necessary for optimum phosphatase activity. Catalysis depends on D25, which acts as the Nucleophile. Residues D25, D27, and D253 each coordinate Mg(2+). The active-site Proton donor is D27.

The protein belongs to the HAD-like hydrolase superfamily. EYA family. Requires Mg(2+) as cofactor.

It carries out the reaction O-phospho-L-tyrosyl-[protein] + H2O = L-tyrosyl-[protein] + phosphate. Its activity is regulated as follows. Inhibited by EDTA. Its function is as follows. Possesses phosphatase activity toward para-nitrophenyl phosphate (pNPP) in vitro. Possesses phosphatase activity toward several phosphotyrosine-containing peptides in vitro, with low peptide substrate specificity. The sequence is that of Protein phosphatase EYA from Arabidopsis thaliana (Mouse-ear cress).